Here is a 124-residue protein sequence, read N- to C-terminus: Small ribosomal subunit protein uS13 (124 aa).

The segment at 89–124 is disordered; the sequence is GRRHRQGLPVRGQRTKTNARTRKGPKRTVAGKKKAK. The segment covering 101 to 124 has biased composition (basic residues); sequence QRTKTNARTRKGPKRTVAGKKKAK.

Belongs to the universal ribosomal protein uS13 family. As to quaternary structure, part of the 30S ribosomal subunit. Forms a loose heterodimer with protein S19. Forms two bridges to the 50S subunit in the 70S ribosome.

In terms of biological role, located at the top of the head of the 30S subunit, it contacts several helices of the 16S rRNA. In the 70S ribosome it contacts the 23S rRNA (bridge B1a) and protein L5 of the 50S subunit (bridge B1b), connecting the 2 subunits; these bridges are implicated in subunit movement. Contacts the tRNAs in the A and P-sites. In Nocardioides sp. (strain ATCC BAA-499 / JS614), this protein is Small ribosomal subunit protein uS13.